A 347-amino-acid polypeptide reads, in one-letter code: Protein-glutamate methylesterase/protein-glutamine glutaminase (347 aa).

A Response regulatory domain is found at 6 to 123 (RVLVVDDSPT…HRPFGDLAEK (118 aa)). Aspartate 57 carries the post-translational modification 4-aspartylphosphate. Residues 150-342 (FRVGRKIVAI…EEILKLTAAR (193 aa)) form the CheB-type methylesterase domain. Residues serine 162, histidine 188, and aspartate 284 contribute to the active site.

The protein belongs to the CheB family. In terms of processing, phosphorylated by CheA. Phosphorylation of the N-terminal regulatory domain activates the methylesterase activity.

The protein localises to the cytoplasm. The catalysed reaction is [protein]-L-glutamate 5-O-methyl ester + H2O = L-glutamyl-[protein] + methanol + H(+). It catalyses the reaction L-glutaminyl-[protein] + H2O = L-glutamyl-[protein] + NH4(+). Involved in chemotaxis. Part of a chemotaxis signal transduction system that modulates chemotaxis in response to various stimuli. Catalyzes the demethylation of specific methylglutamate residues introduced into the chemoreceptors (methyl-accepting chemotaxis proteins or MCP) by CheR. Also mediates the irreversible deamidation of specific glutamine residues to glutamic acid. This is Protein-glutamate methylesterase/protein-glutamine glutaminase from Rhizobium etli (strain ATCC 51251 / DSM 11541 / JCM 21823 / NBRC 15573 / CFN 42).